We begin with the raw amino-acid sequence, 360 residues long: Peptide chain release factor 1 (360 aa).

Q235 carries the post-translational modification N5-methylglutamine. Positions 284–312 are disordered; the sequence is ERQAQAQADTRRNLLGSGDRSDKIRTYNY.

The protein belongs to the prokaryotic/mitochondrial release factor family. In terms of processing, methylated by PrmC. Methylation increases the termination efficiency of RF1.

It localises to the cytoplasm. Peptide chain release factor 1 directs the termination of translation in response to the peptide chain termination codons UAG and UAA. The chain is Peptide chain release factor 1 from Histophilus somni (strain 129Pt) (Haemophilus somnus).